Here is a 73-residue protein sequence, read N- to C-terminus: MNQPVVETAELMRRVEQLVDAAANRYRITVQVANRAKRRRYEDLNDDDGNFKPVLRAIFEMSDEMNEPEIIGD.

The protein belongs to the RNA polymerase subunit omega family. As to quaternary structure, in cyanobacteria the RNAP catalytic core is composed of 2 alpha, 1 beta, 1 beta', 1 gamma and 1 omega subunit. When a sigma factor is associated with the core the holoenzyme is formed, which can initiate transcription.

The enzyme catalyses RNA(n) + a ribonucleoside 5'-triphosphate = RNA(n+1) + diphosphate. Its function is as follows. Promotes RNA polymerase assembly. Latches the N- and C-terminal regions of the beta' subunit thereby facilitating its interaction with the beta and alpha subunits. This is DNA-directed RNA polymerase subunit omega from Gloeobacter violaceus (strain ATCC 29082 / PCC 7421).